We begin with the raw amino-acid sequence, 156 residues long: Myosin regulatory light chain, striated adductor muscle (156 aa).

At Ala-1 the chain carries Blocked amino end (Ala). 2 EF-hand domains span residues 15–50 (KQIQEMKEAFSMIDVDRDGFVNKDDLKAISEQLGRT) and 84–119 (DTEETLRNAFAMFDELDTKKLNIEYIKDLLENMGDN). Ca(2+)-binding residues include Asp-28, Asp-30, Asp-32, and Asp-39.

Functionally, in molluscan muscle, calcium regulation is associated with myosin rather than with actin. Muscle myosin contains two types of light chains: the catalytic light chain, essential for ATPase activity, and the regulatory light chain, a calcium-binding protein responsible for Ca(2+) dependent binding and Ca(2+) dependent Mg-ATPase activity. The sequence is that of Myosin regulatory light chain, striated adductor muscle from Mizuhopecten yessoensis (Japanese scallop).